The sequence spans 243 residues: Phosphoadenosine 5'-phosphosulfate reductase (243 aa).

The active-site Nucleophile; cysteine thiosulfonate intermediate is Cys239.

The protein belongs to the PAPS reductase family. CysH subfamily.

Its subcellular location is the cytoplasm. It carries out the reaction [thioredoxin]-disulfide + sulfite + adenosine 3',5'-bisphosphate + 2 H(+) = [thioredoxin]-dithiol + 3'-phosphoadenylyl sulfate. It participates in sulfur metabolism; hydrogen sulfide biosynthesis; sulfite from sulfate: step 3/3. In terms of biological role, catalyzes the formation of sulfite from phosphoadenosine 5'-phosphosulfate (PAPS) using thioredoxin as an electron donor. The protein is Phosphoadenosine 5'-phosphosulfate reductase of Erwinia tasmaniensis (strain DSM 17950 / CFBP 7177 / CIP 109463 / NCPPB 4357 / Et1/99).